A 332-amino-acid chain; its full sequence is Tyrosine--tRNA ligase (332 aa).

Residues Tyr-32, Tyr-156, Gln-160, Asp-163, and Gln-178 each coordinate L-tyrosine. The 'KMSKS' region motif lies at 219–223 (KMSKS). Lys-222 contributes to the ATP binding site.

It belongs to the class-I aminoacyl-tRNA synthetase family. TyrS type 4 subfamily. Homodimer.

The protein localises to the cytoplasm. It catalyses the reaction tRNA(Tyr) + L-tyrosine + ATP = L-tyrosyl-tRNA(Tyr) + AMP + diphosphate + H(+). Functionally, catalyzes the attachment of tyrosine to tRNA(Tyr) in a two-step reaction: tyrosine is first activated by ATP to form Tyr-AMP and then transferred to the acceptor end of tRNA(Tyr). The chain is Tyrosine--tRNA ligase from Thermoplasma acidophilum (strain ATCC 25905 / DSM 1728 / JCM 9062 / NBRC 15155 / AMRC-C165).